The primary structure comprises 513 residues: Maturase K (513 aa).

Belongs to the intron maturase 2 family. MatK subfamily.

The protein resides in the plastid. The protein localises to the chloroplast. Functionally, usually encoded in the trnK tRNA gene intron. Probably assists in splicing its own and other chloroplast group II introns. The protein is Maturase K of Molinia caerulea (Purple moor-grass).